The following is a 593-amino-acid chain: High affinity cGMP-specific 3',5'-cyclic phosphodiesterase 9A (593 aa).

Residues Ser87–Gly142 are disordered. Basic and acidic residues predominate over residues Arg104–Ala122. Residues Pro236 to Asp557 enclose the PDEase domain. The Proton donor role is filled by His312. Residue His312 to His316 participates in 3',5'-cyclic GMP binding. 3 residues coordinate Zn(2+): His316, His352, and Asp353. Asp353 serves as a coordination point for 3',5'-cyclic GMP. Position 353 (Asp353) interacts with Mg(2+). The residue at position 379 (Ser379) is a Phosphoserine. Residues Asp462, Tyr484, and Ala512–Gln513 each bind 3',5'-cyclic GMP. Residue Asp462 participates in Zn(2+) binding. Positions Gln564–Ala593 are disordered. Positions Glu576–Ala593 are enriched in basic and acidic residues.

The protein belongs to the cyclic nucleotide phosphodiesterase family. PDE9 subfamily. In terms of assembly, homodimer. Zn(2+) serves as cofactor. It depends on Mg(2+) as a cofactor.

Its subcellular location is the cell projection. The protein resides in the ruffle membrane. It is found in the cytoplasm. The protein localises to the perinuclear region. It localises to the golgi apparatus. Its subcellular location is the endoplasmic reticulum. The protein resides in the cell membrane. It is found in the sarcolemma. The catalysed reaction is 3',5'-cyclic GMP + H2O = GMP + H(+). It functions in the pathway purine metabolism; 3',5'-cyclic GMP degradation; GMP from 3',5'-cyclic GMP: step 1/1. Its activity is regulated as follows. Specifically inhibited by a compound named 3r ((R)-2-((1-cyclopentyl-4-hydroxy-1H-pyrazolo[3,4-d]pyrimidin-6- yl)amino)-N-(4-methoxyphenyl)propanamide); the inhibitor forms a hydrogen bond with Tyr-484, Ala-512 and Gln-513. Specifically hydrolyzes the second messenger cGMP, which is a key regulator of many important physiological processes. Highly specific: compared to other members of the cyclic nucleotide phosphodiesterase family, has the highest affinity and selectivity for cGMP. Specifically regulates natriuretic-peptide-dependent cGMP signaling in heart, acting as a regulator of cardiac hypertrophy in myocytes and muscle. Does not regulate nitric oxide-dependent cGMP in heart. Additional experiments are required to confirm whether its ability to hydrolyze natriuretic-peptide-dependent cGMP is specific to heart or is a general feature of the protein. In brain, involved in cognitive function, such as learning and long-term memory. The chain is High affinity cGMP-specific 3',5'-cyclic phosphodiesterase 9A (PDE9A) from Pan troglodytes (Chimpanzee).